A 1083-amino-acid polypeptide reads, in one-letter code: Carbamoyl phosphate synthase large chain (1083 aa).

Positions 1–402 (MPRRDDIKKI…SFQKALRGLE (402 aa)) are carboxyphosphate synthetic domain. Positions 129, 169, 175, 176, 208, 210, 215, 241, 242, 243, 285, and 299 each coordinate ATP. Residues 133–328 (KQAMDKIGLD…IAKIAAKLAV (196 aa)) form the ATP-grasp 1 domain. Mg(2+) is bound by residues glutamine 285, glutamate 299, and asparagine 301. Residues glutamine 285, glutamate 299, and asparagine 301 each contribute to the Mn(2+) site. Positions 403–557 (VGAFGFGSDP…YSTYESETEV (155 aa)) are oligomerization domain. Residues 558–944 (PAKGDKKRVV…AFAKSQLAAG (387 aa)) are carbamoyl phosphate synthetic domain. Residues 683 to 878 (SSLIDELGLR…VANLATKVMA (196 aa)) form the ATP-grasp 2 domain. Residues arginine 719, arginine 758, leucine 760, glutamate 765, glycine 790, valine 791, histidine 792, serine 793, glutamine 833, and glutamate 849 each coordinate ATP. Mg(2+)-binding residues include glutamine 833, glutamate 849, and asparagine 851. Glutamine 833, glutamate 849, and asparagine 851 together coordinate Mn(2+). Residues 945-1083 (TVLPESGKIF…SLQRRYAQNV (139 aa)) form the MGS-like domain. Residues 945–1083 (TVLPESGKIF…SLQRRYAQNV (139 aa)) are allosteric domain.

This sequence belongs to the CarB family. As to quaternary structure, composed of two chains; the small (or glutamine) chain promotes the hydrolysis of glutamine to ammonia, which is used by the large (or ammonia) chain to synthesize carbamoyl phosphate. Tetramer of heterodimers (alpha,beta)4. Mg(2+) serves as cofactor. Mn(2+) is required as a cofactor.

It catalyses the reaction hydrogencarbonate + L-glutamine + 2 ATP + H2O = carbamoyl phosphate + L-glutamate + 2 ADP + phosphate + 2 H(+). The catalysed reaction is hydrogencarbonate + NH4(+) + 2 ATP = carbamoyl phosphate + 2 ADP + phosphate + 2 H(+). It functions in the pathway amino-acid biosynthesis; L-arginine biosynthesis; carbamoyl phosphate from bicarbonate: step 1/1. Its pathway is pyrimidine metabolism; UMP biosynthesis via de novo pathway; (S)-dihydroorotate from bicarbonate: step 1/3. Its function is as follows. Large subunit of the glutamine-dependent carbamoyl phosphate synthetase (CPSase). CPSase catalyzes the formation of carbamoyl phosphate from the ammonia moiety of glutamine, carbonate, and phosphate donated by ATP, constituting the first step of 2 biosynthetic pathways, one leading to arginine and/or urea and the other to pyrimidine nucleotides. The large subunit (synthetase) binds the substrates ammonia (free or transferred from glutamine from the small subunit), hydrogencarbonate and ATP and carries out an ATP-coupled ligase reaction, activating hydrogencarbonate by forming carboxy phosphate which reacts with ammonia to form carbamoyl phosphate. This Rhodopirellula baltica (strain DSM 10527 / NCIMB 13988 / SH1) protein is Carbamoyl phosphate synthase large chain.